The chain runs to 129 residues: Small ribosomal subunit protein uS9 (129 aa).

Belongs to the universal ribosomal protein uS9 family.

This chain is Small ribosomal subunit protein uS9 (rpsI), found in Helicobacter pylori (strain J99 / ATCC 700824) (Campylobacter pylori J99).